The chain runs to 330 residues: Protein TIFY 11f (330 aa).

The Tify 1 domain occupies 61 to 97 (EAAAAAQLKIMYGGRMLVFDDFFPAGGAVVELVRAAA). The Jas motif lies at 124 to 142 (PVVRKVSLQRFVEKRRRMR). The Nuclear localization signal motif lies at 126–133 (VRKVSLQR). One can recognise a Tify 2 domain in the interval 228–264 (EAAAAAQLKIMYGGRMLVFDDFFPAGGAVVELVRAAA). Positions 267–330 (GRDDDGARAR…SGRTDDAAFY (64 aa)) are disordered.

Belongs to the TIFY/JAZ family. In terms of processing, ubiquitinated. Targeted for degradation by the SCF(COI1) E3 ubiquitin ligase-proteasome pathway during jasmonate signaling.

The protein resides in the nucleus. Its function is as follows. Repressor of jasmonate responses. The sequence is that of Protein TIFY 11f from Oryza sativa subsp. japonica (Rice).